Here is a 208-residue protein sequence, read N- to C-terminus: U11/U12 small nuclear ribonucleoprotein 35 kDa protein (208 aa).

The region spanning 50–128 (LTLFVARLNP…YELLVDVEQE (79 aa)) is the RRM domain. Residues 133–208 (GWRPRRLGGG…TEDRTHRHTY (76 aa)) form a disordered region. The segment covering 171–208 (RPAEPRGRETERERDRRDYRDRRHERTHTEDRTHRHTY) has biased composition (basic and acidic residues).

The protein localises to the nucleus. This is U11/U12 small nuclear ribonucleoprotein 35 kDa protein (snrnp35) from Danio rerio (Zebrafish).